A 495-amino-acid chain; its full sequence is MKTDRLLINASPETCTKGDAEMDTMDTIDRMTSVKVLAEGKVLSNFEEPGLMRCGYHDAKNWVRRLSSETIVGEDTSNLYPFYVDTAYDVRRLRKDLINAKVDLQVENLIIICNINDISTVFLMREVVEWILRNFHSITVYVQDIFKKSTQFAVGDLCKDSNCSKNRVKYWSKEFVKKHDSFFDLMITLGGDGTVLFASSIFTKDVPPIVPFALGSLGFLTNFEFQNFKETLKHILTDEVRINLRMRLQCKLYRRNKPEIDAATGRKICYIDFISEHHVLNEVTIDRGPAPCLSLLELYGNDSLMTKVQGDGLIVATPTGSTAYSLSAGGSLISPSVNAIAVTPICPHTLSFRPIILPDSMELKVRVDMNSRGTSWVNFDGKDRVELKQGDYVVITASPYSVPTIESSASEFFESISKNLNWNDREEQKPFAHILSPKNQEKYRLDSSKNGNDTISNPLESSCISSDAQDEERKSVTETETEIVVERTRQAHFAI.

The disordered stretch occupies residues 442 to 480; sequence KYRLDSSKNGNDTISNPLESSCISSDAQDEERKSVTETE. Residues 448 to 467 are compositionally biased toward polar residues; that stretch reads SKNGNDTISNPLESSCISSD.

It belongs to the NAD kinase family. In terms of assembly, homooctamer. Mg(2+) is required as a cofactor. Requires Mn(2+) as cofactor. The cofactor is Co(2+). It depends on Ca(2+) as a cofactor.

It catalyses the reaction NADH + ATP = ADP + NADPH + H(+). Its function is as follows. ATP-NADH kinase with a low phosphorylation activity of both NADH and NAD(+) to produce NADP and NADPH by using ATP. UTR1 is responsible for essentially all of the NAD/NADH kinase activity resident in the cytoplasm, whereas POS5 is responsible for all mitochondrial NAD/NADH kinase activity and consequent mitochondrial genome maintenance. YEF1 can substitute for UTR1 when overexpressed. The sequence is that of ATP-NADH kinase YEF1 (YEF1) from Saccharomyces cerevisiae (strain ATCC 204508 / S288c) (Baker's yeast).